The chain runs to 417 residues: UDP-N-acetylglucosamine 1-carboxyvinyltransferase (417 aa).

Position 22 to 23 (22 to 23) interacts with phosphoenolpyruvate; that stretch reads KN. Arg92 contacts UDP-N-acetyl-alpha-D-glucosamine. Cys116 serves as the catalytic Proton donor. A 2-(S-cysteinyl)pyruvic acid O-phosphothioketal modification is found at Cys116. UDP-N-acetyl-alpha-D-glucosamine-binding positions include 121 to 125, Asp306, and Ile328; that span reads RPIDL.

It belongs to the EPSP synthase family. MurA subfamily.

It is found in the cytoplasm. The catalysed reaction is phosphoenolpyruvate + UDP-N-acetyl-alpha-D-glucosamine = UDP-N-acetyl-3-O-(1-carboxyvinyl)-alpha-D-glucosamine + phosphate. Its pathway is cell wall biogenesis; peptidoglycan biosynthesis. Its function is as follows. Cell wall formation. Adds enolpyruvyl to UDP-N-acetylglucosamine. In Buchnera aphidicola subsp. Schizaphis graminum (strain Sg), this protein is UDP-N-acetylglucosamine 1-carboxyvinyltransferase.